Consider the following 340-residue polypeptide: Glyceraldehyde-3-phosphate dehydrogenase (340 aa).

Residues 13–14 and G112 contribute to the NAD(+) site; that span reads TI. 141–143 is a D-glyceraldehyde 3-phosphate binding site; sequence SCN. Catalysis depends on C142, which acts as the Nucleophile. R170 serves as a coordination point for NAD(+). 196–197 contributes to the D-glyceraldehyde 3-phosphate binding site; the sequence is HG. Q302 is an NAD(+) binding site.

Belongs to the glyceraldehyde-3-phosphate dehydrogenase family. Homotetramer.

It localises to the cytoplasm. The enzyme catalyses D-glyceraldehyde 3-phosphate + phosphate + NADP(+) = (2R)-3-phospho-glyceroyl phosphate + NADPH + H(+). The catalysed reaction is D-glyceraldehyde 3-phosphate + phosphate + NAD(+) = (2R)-3-phospho-glyceroyl phosphate + NADH + H(+). The protein operates within carbohydrate degradation; glycolysis; pyruvate from D-glyceraldehyde 3-phosphate: step 1/5. This is Glyceraldehyde-3-phosphate dehydrogenase (gap) from Archaeoglobus fulgidus (strain ATCC 49558 / DSM 4304 / JCM 9628 / NBRC 100126 / VC-16).